Consider the following 303-residue polypeptide: Glycine--tRNA ligase alpha subunit (303 aa).

The protein belongs to the class-II aminoacyl-tRNA synthetase family. As to quaternary structure, tetramer of two alpha and two beta subunits.

It is found in the cytoplasm. It carries out the reaction tRNA(Gly) + glycine + ATP = glycyl-tRNA(Gly) + AMP + diphosphate. In Escherichia fergusonii (strain ATCC 35469 / DSM 13698 / CCUG 18766 / IAM 14443 / JCM 21226 / LMG 7866 / NBRC 102419 / NCTC 12128 / CDC 0568-73), this protein is Glycine--tRNA ligase alpha subunit.